Consider the following 388-residue polypeptide: Putative F-box protein At3g49520 (388 aa).

Residues 1-47 (MTTISDLPYDLVKEIFSWVPFTSLRAVRSTCKTWNALSKNQIFGKKS) form the F-box domain.

The protein is Putative F-box protein At3g49520 of Arabidopsis thaliana (Mouse-ear cress).